A 138-amino-acid chain; its full sequence is Large ribosomal subunit protein uL16 (138 aa).

The segment covering 1–15 (MLSPKKVKYRKKQRG) has biased composition (basic residues). The interval 1–21 (MLSPKKVKYRKKQRGRLSGEA) is disordered.

This sequence belongs to the universal ribosomal protein uL16 family. Part of the 50S ribosomal subunit.

In terms of biological role, binds 23S rRNA and is also seen to make contacts with the A and possibly P site tRNAs. In Borrelia garinii subsp. bavariensis (strain ATCC BAA-2496 / DSM 23469 / PBi) (Borreliella bavariensis), this protein is Large ribosomal subunit protein uL16.